We begin with the raw amino-acid sequence, 973 residues long: Sodium/calcium exchanger 1 (973 aa).

An N-terminal signal peptide occupies residues 1–35 (MYNMRRLSLSPTFSMGFHLLVTVSLLFSHVDHVIA). Topologically, residues 36-74 (ETEMEGEGNETGECTGSYYCKKGVILPIWEPQDPSFGDK) are extracellular. Asn44 carries N-linked (GlcNAc...) asparagine glycosylation. The chain crosses the membrane as a helical span at residues 75 to 95 (IARATVYFVAMVYMFLGVSII). At 96–136 (ADRFMSSIEVITSQEKEITIKKPNGETTKTTVRIWNETVSN) the chain is on the cytoplasmic side. Residues 137–157 (LTLMALGSSAPEILLSVIEVC) traverse the membrane as a helical segment. The Alpha-1 repeat unit spans residues 141–181 (ALGSSAPEILLSVIEVCGHNFTAGDLGPSTIVGSAAFNMFI). Residues 158–170 (GHNFTAGDLGPST) are Extracellular-facing. N-linked (GlcNAc...) asparagine glycosylation occurs at Asn160. The chain crosses the membrane as a helical span at residues 171–191 (IVGSAAFNMFIIIALCVYVVP). The Cytoplasmic portion of the chain corresponds to 192 to 204 (DGETRKIKHLRVF). A helical transmembrane segment spans residues 205-225 (FVTAAWSIFAYTWLYIILSVI). Over 226–231 (SPGVVE) the chain is Extracellular. The helical transmembrane segment at 232 to 252 (VWEGLLTFFFFPICVVFAWVA) threads the bilayer. Residues 253-800 (DRRLLFYKYV…FVPPTEYWNG (548 aa)) lie on the Cytoplasmic side of the membrane. Residues 254-273 (RRLLFYKYVYKRYRAGKQRG) are putative calmodulin-binding region. Phosphoserine occurs at positions 285 and 392. Calx-beta domains follow at residues 396 to 496 (VNTE…VHLS) and 527 to 627 (ATVT…LEIG). Residues Glu420, Asp456, Asp481, Asp482, Ile484, Glu486, Glu489, Asp533, Asp534, Asp535, Glu551, Asp587, Asp613, Glu614, Glu615, and Glu718 each contribute to the Ca(2+) site. A helical transmembrane segment spans residues 801 to 821 (WACFIVSILMIGLLTAFIGDL). The Extracellular segment spans residues 822–824 (ASH). Residues 825 to 845 (FGCTIGLKDSVTAVVFVALGT) form a helical membrane-spanning segment. An Alpha-2 repeat occupies 842-878 (ALGTSVPDTFASKVAATQDQYADASIGNVTGSNAVNV). Over 846-874 (SVPDTFASKVAATQDQYADASIGNVTGSN) the chain is Cytoplasmic. The chain crosses the membrane as a helical span at residues 875 to 895 (AVNVFLGIGVAWSIAAIYHAA). The Extracellular portion of the chain corresponds to 896–906 (NGEQFKVSPGT). Residues 907–927 (LAFSVTLFTIFAFINVGVLLY) form a helical membrane-spanning segment. The Cytoplasmic portion of the chain corresponds to 928-944 (RRRPEIGGELGGPRTAK). Residues 945–965 (LLTSCLFVLLWLLYIFFSSLE) traverse the membrane as a helical segment. Residues 966-973 (AYCHIKGF) lie on the Extracellular side of the membrane.

This sequence belongs to the Ca(2+):cation antiporter (CaCA) (TC 2.A.19) family. SLC8 subfamily. Detected primarily in heart and at lower levels in brain. Expressed in cardiac sarcolemma, brain, kidney, liver, pancreas, skeletal muscle, placenta and lung.

Its subcellular location is the cell membrane. It catalyses the reaction Ca(2+)(in) + 3 Na(+)(out) = Ca(2+)(out) + 3 Na(+)(in). Its activity is regulated as follows. Activated by micromolar levels of Ca(2+). Its function is as follows. Mediates the exchange of one Ca(2+) ion against three to four Na(+) ions across the cell membrane, and thereby contributes to the regulation of cytoplasmic Ca(2+) levels and Ca(2+)-dependent cellular processes. Contributes to Ca(2+) transport during excitation-contraction coupling in muscle. In a first phase, voltage-gated channels mediate the rapid increase of cytoplasmic Ca(2+) levels due to release of Ca(2+) stores from the endoplasmic reticulum. SLC8A1 mediates the export of Ca(2+) from the cell during the next phase, so that cytoplasmic Ca(2+) levels rapidly return to baseline. Required for normal embryonic heart development and the onset of heart contractions. In Homo sapiens (Human), this protein is Sodium/calcium exchanger 1 (SLC8A1).